A 501-amino-acid chain; its full sequence is Putative glycogen synthase kinase-3 homolog (501 aa).

The Protein kinase domain occupies 33–317 (YTDAKVVGNG…PLMGCAHPFF (285 aa)). ATP contacts are provided by residues 39 to 47 (VGNGSFGVV) and K62. D158 functions as the Proton acceptor in the catalytic mechanism. Y193 bears the Phosphotyrosine mark. Disordered stretches follow at residues 355-427 (LLPR…HVAV) and 446-501 (SYAV…EDEN). Positions 381–390 (ESPRKTEDSQ) are enriched in basic and acidic residues. 2 stretches are compositionally biased toward acidic residues: residues 451–471 (EDAEDNLEEDVGDENDYDYDD) and 482–501 (DDMDEASESDDDDFEEEDEN).

This sequence belongs to the protein kinase superfamily. CMGC Ser/Thr protein kinase family. GSK-3 subfamily. Phosphorylation on Tyr-193 is necessary for the activity.

It catalyses the reaction L-seryl-[tau protein] + ATP = O-phospho-L-seryl-[tau protein] + ADP + H(+). The catalysed reaction is L-threonyl-[tau protein] + ATP = O-phospho-L-threonyl-[tau protein] + ADP + H(+). The protein is Putative glycogen synthase kinase-3 homolog (gskt) of Drosophila melanogaster (Fruit fly).